A 156-amino-acid polypeptide reads, in one-letter code: Ribosomal RNA large subunit methyltransferase H (156 aa).

S-adenosyl-L-methionine contacts are provided by residues L73, G104, and L123 to L128.

It belongs to the RNA methyltransferase RlmH family. In terms of assembly, homodimer.

Its subcellular location is the cytoplasm. It catalyses the reaction pseudouridine(1915) in 23S rRNA + S-adenosyl-L-methionine = N(3)-methylpseudouridine(1915) in 23S rRNA + S-adenosyl-L-homocysteine + H(+). Functionally, specifically methylates the pseudouridine at position 1915 (m3Psi1915) in 23S rRNA. The polypeptide is Ribosomal RNA large subunit methyltransferase H (Neisseria gonorrhoeae (strain NCCP11945)).